We begin with the raw amino-acid sequence, 201 residues long: Recombination protein RecR (201 aa).

Residues 57–72 (CADCRTFTEQDICTIC) form a C4-type zinc finger. The region spanning 81–176 (GQICVVESPA…VASRIAHGVP (96 aa)) is the Toprim domain.

The protein belongs to the RecR family.

Its function is as follows. May play a role in DNA repair. It seems to be involved in an RecBC-independent recombinational process of DNA repair. It may act with RecF and RecO. This Serratia proteamaculans (strain 568) protein is Recombination protein RecR.